The sequence spans 171 residues: Large ribosomal subunit protein uL10 (171 aa).

It belongs to the universal ribosomal protein uL10 family. Part of the ribosomal stalk of the 50S ribosomal subunit. The N-terminus interacts with L11 and the large rRNA to form the base of the stalk. The C-terminus forms an elongated spine to which L12 dimers bind in a sequential fashion forming a multimeric L10(L12)X complex.

In terms of biological role, forms part of the ribosomal stalk, playing a central role in the interaction of the ribosome with GTP-bound translation factors. The polypeptide is Large ribosomal subunit protein uL10 (Maricaulis maris (strain MCS10) (Caulobacter maris)).